The sequence spans 43 residues: DRDSCVDKSKCGKYGYYGQCDECCKKAGDRAGTCVYYKCKCNP.

Disulfide bonds link C5/C23, C11/C34, C20/C39, and C24/C41.

The protein belongs to the ergtoxin family. Gamma-KTx 4 subfamily. Expressed by the venom gland.

It localises to the secreted. Reversibly blocks Kv11/ERG potassium channels. The protein is Potassium channel toxin gamma-KTx 4.13 of Centruroides noxius (Mexican scorpion).